Consider the following 213-residue polypeptide: Uracil phosphoribosyltransferase (213 aa).

Residues Arg-78, Arg-103, and 130–138 each bind 5-phospho-alpha-D-ribose 1-diphosphate; that span reads DPMLATGGS. Uracil-binding positions include Ile-197 and 202 to 204; that span reads GDA. Asp-203 lines the 5-phospho-alpha-D-ribose 1-diphosphate pocket.

The protein belongs to the UPRTase family. Mg(2+) is required as a cofactor.

The catalysed reaction is UMP + diphosphate = 5-phospho-alpha-D-ribose 1-diphosphate + uracil. It participates in pyrimidine metabolism; UMP biosynthesis via salvage pathway; UMP from uracil: step 1/1. Its activity is regulated as follows. Allosterically activated by GTP. Functionally, catalyzes the conversion of uracil and 5-phospho-alpha-D-ribose 1-diphosphate (PRPP) to UMP and diphosphate. This Cutibacterium acnes (strain DSM 16379 / KPA171202) (Propionibacterium acnes) protein is Uracil phosphoribosyltransferase.